The chain runs to 368 residues: Germination protease (368 aa).

Positions 1 to 15 (MKEPLDLSKYSVRTD) are excised as a propeptide.

Belongs to the peptidase A25 family. In terms of assembly, homotetramer. Autoproteolytically processed. The inactive tetrameric zymogen termed p46 autoprocesses to a smaller form termed p41, which is active only during spore germination.

The enzyme catalyses Endopeptidase action with P4 Glu or Asp, P1 preferably Glu &gt; Asp, P1' hydrophobic and P2' Ala.. In terms of biological role, initiates the rapid degradation of small, acid-soluble proteins during spore germination. The polypeptide is Germination protease (Bacillus anthracis (strain A0248)).